The chain runs to 130 residues: Small ribosomal subunit protein uS11 (130 aa).

The protein belongs to the universal ribosomal protein uS11 family. Part of the 30S ribosomal subunit. Interacts with proteins S7 and S18. Binds to IF-3.

Functionally, located on the platform of the 30S subunit, it bridges several disparate RNA helices of the 16S rRNA. Forms part of the Shine-Dalgarno cleft in the 70S ribosome. The chain is Small ribosomal subunit protein uS11 from Gluconobacter oxydans (strain 621H) (Gluconobacter suboxydans).